We begin with the raw amino-acid sequence, 359 residues long: Protein-glutamate methylesterase/protein-glutamine glutaminase 2 (359 aa).

Residues 6-123 form the Response regulatory domain; the sequence is KVMIVDDSAL…KSFLEDASND (118 aa). A 4-aspartylphosphate modification is found at Asp57. The 193-residue stretch at 167-359 folds into the CheB-type methylesterase domain; that stretch reads ERTTDQLVAI…GAIVGYGKSC (193 aa). Catalysis depends on residues Ser179, His205, and Asp301.

Belongs to the CheB family. Post-translationally, phosphorylated by CheA. Phosphorylation of the N-terminal regulatory domain activates the methylesterase activity.

The protein localises to the cytoplasm. It carries out the reaction [protein]-L-glutamate 5-O-methyl ester + H2O = L-glutamyl-[protein] + methanol + H(+). The catalysed reaction is L-glutaminyl-[protein] + H2O = L-glutamyl-[protein] + NH4(+). Involved in chemotaxis. Part of a chemotaxis signal transduction system that modulates chemotaxis in response to various stimuli. Catalyzes the demethylation of specific methylglutamate residues introduced into the chemoreceptors (methyl-accepting chemotaxis proteins or MCP) by CheR. Also mediates the irreversible deamidation of specific glutamine residues to glutamic acid. This is Protein-glutamate methylesterase/protein-glutamine glutaminase 2 from Dechloromonas aromatica (strain RCB).